The sequence spans 1007 residues: Ephrin type-A receptor 10 (1007 aa).

The signal sequence occupies residues methionine 1–alanine 22. The Extracellular portion of the chain corresponds to leucine 23 to alanine 565. Positions glutamate 35 to arginine 216 constitute an Eph LBD domain. N-linked (GlcNAc...) asparagine glycosylation occurs at asparagine 311. 2 disordered regions span residues alanine 323–aspartate 343 and proline 467–asparagine 486. Fibronectin type-III domains lie at alanine 340 to glycine 452 and glutamate 456 to glutamate 554. Asparagine 486 is a glycosylation site (N-linked (GlcNAc...) asparagine). The chain crosses the membrane as a helical span at residues valine 566–leucine 586. Residues alanine 587–valine 1007 lie on the Cytoplasmic side of the membrane. The region spanning valine 644 to leucine 899 is the Protein kinase domain. Positions proline 932–arginine 996 constitute an SAM domain.

Belongs to the protein kinase superfamily. Tyr protein kinase family. Ephrin receptor subfamily. In terms of tissue distribution, expressed in the cochlea, in the organ of Corti, spiral ganglion, and stria vascularis.

It is found in the cell membrane. It carries out the reaction L-tyrosyl-[protein] + ATP = O-phospho-L-tyrosyl-[protein] + ADP + H(+). Functionally, receptor for members of the ephrin-A family. Binds to EFNA3, EFNA4 and EFNA5. In Mus musculus (Mouse), this protein is Ephrin type-A receptor 10 (Epha10).